The sequence spans 88 residues: MATKIRLARAGAKKKPFYQVVVADERCKRDGRFIENVGTYDPNQNPAVFKLEEGKTLEWLGKGAQPTDTVKQILKKAGIWEKFVSKLA.

It belongs to the bacterial ribosomal protein bS16 family.

This is Small ribosomal subunit protein bS16 from Geotalea daltonii (strain DSM 22248 / JCM 15807 / FRC-32) (Geobacter daltonii).